The chain runs to 247 residues: UPF0246 protein CD630_18230 (247 aa).

This sequence belongs to the UPF0246 family.

The protein is UPF0246 protein CD630_18230 of Clostridioides difficile (strain 630) (Peptoclostridium difficile).